We begin with the raw amino-acid sequence, 404 residues long: Cysteine desulfurase IscS (404 aa).

Pyridoxal 5'-phosphate is bound by residues 75–76, N155, Q183, and 203–205; these read AT and SAH. The residue at position 206 (K206) is an N6-(pyridoxal phosphate)lysine. T243 contributes to the pyridoxal 5'-phosphate binding site. C328 acts as the Cysteine persulfide intermediate in catalysis. C328 contacts [2Fe-2S] cluster.

The protein belongs to the class-V pyridoxal-phosphate-dependent aminotransferase family. NifS/IscS subfamily. In terms of assembly, homodimer. Forms a heterotetramer with IscU, interacts with other sulfur acceptors. Pyridoxal 5'-phosphate serves as cofactor.

The protein resides in the cytoplasm. It carries out the reaction (sulfur carrier)-H + L-cysteine = (sulfur carrier)-SH + L-alanine. The protein operates within cofactor biosynthesis; iron-sulfur cluster biosynthesis. Its function is as follows. Master enzyme that delivers sulfur to a number of partners involved in Fe-S cluster assembly, tRNA modification or cofactor biosynthesis. Catalyzes the removal of elemental sulfur atoms from cysteine to produce alanine. Functions as a sulfur delivery protein for Fe-S cluster synthesis onto IscU, an Fe-S scaffold assembly protein, as well as other S acceptor proteins. In Shewanella woodyi (strain ATCC 51908 / MS32), this protein is Cysteine desulfurase IscS.